A 128-amino-acid polypeptide reads, in one-letter code: MDHSAEKAAANAEVPQELLEEMLWYFRAEDAAPWNYSILVLAVLVVMTSMFLLRRSILANRNRKKQPQDKETPEDLHLDDSIMKENNSQVFLRETLISEKPDLAPGEPELKEKDSSLVFLPDPQETES.

The Extracellular segment spans residues 1–30; that stretch reads MDHSAEKAAANAEVPQELLEEMLWYFRAED. A helical transmembrane segment spans residues 31-53; sequence AAPWNYSILVLAVLVVMTSMFLL. At 54-128 the chain is on the cytoplasmic side; that stretch reads RRSILANRNR…FLPDPQETES (75 aa). Disordered regions lie at residues 61 to 80 and 101 to 128; these read RNRK…HLDD and PDLA…ETES. Composition is skewed to basic and acidic residues over residues 66 to 80 and 101 to 115; these read QPQD…HLDD and PDLA…EKDS. Ser-116 bears the Phosphoserine mark.

Belongs to the OST-beta family. As to quaternary structure, interacts with SLC51A. The Ost-alpha/Ost-beta complex is a heterodimer composed of alpha (SLC51A) and beta (SLC51B) subunit; induces the transport of SLC51A from the endoplasmic reticulum to the plasma membrane. In terms of tissue distribution, present at high level in ileum. In ileum, it is restricted to the apical domain on the mature villus enterocytes with little detectable expression in the goblet cells or crypt enterocytes (at protein level). Expressed in kidney but not in heart, brain, liver, spleen, embryo, lung, thymus, ovary nor testis.

The protein resides in the cell membrane. The catalysed reaction is taurocholate(out) = taurocholate(in). It catalyses the reaction tauroursodeoxycholate(out) = tauroursodeoxycholate(in). The enzyme catalyses glycoursodeoxycholate(out) = glycoursodeoxycholate(in). It carries out the reaction glycocholate(out) = glycocholate(in). The catalysed reaction is taurochenodeoxycholate(out) = taurochenodeoxycholate(in). It catalyses the reaction glycochenodeoxycholate(out) = glycochenodeoxycholate(in). The enzyme catalyses taurodeoxycholate(out) = taurodeoxycholate(in). It carries out the reaction glycodeoxycholate(out) = glycodeoxycholate(in). The catalysed reaction is prostaglandin E2(out) = prostaglandin E2(in). It catalyses the reaction estrone 3-sulfate(out) = estrone 3-sulfate(in). The enzyme catalyses dehydroepiandrosterone 3-sulfate(out) = dehydroepiandrosterone 3-sulfate(in). Essential component of the Ost-alpha/Ost-beta complex, a heterodimer that acts as the intestinal basolateral transporter responsible for bile acid export from enterocytes into portal blood. The Ost-alpha/Ost-beta complex efficiently transports the major species of bile acids (taurocholate). Taurine conjugates are transported more efficiently across the basolateral membrane than glycine-conjugated bile acids. Can also transport steroids such as estrone 3-sulfate and dehydroepiandrosterone 3-sulfate, therefore playing a role in the enterohepatic circulation of sterols. Able to transport eicosanoids such as prostaglandin E2. Modulates SLC51A glycosylation, membrane trafficking and stability activities. This Mus musculus (Mouse) protein is Organic solute transporter subunit beta (Slc51b).